The chain runs to 67 residues: Conotoxin mr3d (67 aa).

An N-terminal signal peptide occupies residues 1-19 (MSKLGILLTICLLLFPLTA). Positions 20-52 (VPLDGDQPADRPAERMQDDISSEHHPFFDPVKR) are excised as a propeptide. Disulfide bonds link C53/C65, C54/C62, and C58/C66. 4-hydroxyproline; partial is present on P64. Residue C66 is modified to Cysteine amide; partial.

This sequence belongs to the conotoxin M superfamily. Post-translationally, has been found to be hydroxylated and amidated by Han et al. (2006), and to be unmodified by Ju et al. (2022). Expressed by the venom duct.

The protein localises to the secreted. The sequence is that of Conotoxin mr3d from Conus marmoreus (Marble cone).